The primary structure comprises 65 residues: Large ribosomal subunit protein bL35 (65 aa).

Residues 1 to 25 (MPKLKTKSSAAKRFKKTGKGGFKHR) are disordered.

Belongs to the bacterial ribosomal protein bL35 family.

This is Large ribosomal subunit protein bL35 from Francisella tularensis subsp. holarctica (strain FTNF002-00 / FTA).